A 341-amino-acid polypeptide reads, in one-letter code: tRNA N6-adenosine threonylcarbamoyltransferase (341 aa).

Fe cation-binding residues include histidine 112 and histidine 116. Substrate contacts are provided by residues 138 to 142, aspartate 171, glycine 184, aspartate 188, and asparagine 279; that span reads TVSGG. Fe cation is bound at residue aspartate 307.

This sequence belongs to the KAE1 / TsaD family. The cofactor is Fe(2+).

It is found in the cytoplasm. It carries out the reaction L-threonylcarbamoyladenylate + adenosine(37) in tRNA = N(6)-L-threonylcarbamoyladenosine(37) in tRNA + AMP + H(+). In terms of biological role, required for the formation of a threonylcarbamoyl group on adenosine at position 37 (t(6)A37) in tRNAs that read codons beginning with adenine. Is involved in the transfer of the threonylcarbamoyl moiety of threonylcarbamoyl-AMP (TC-AMP) to the N6 group of A37, together with TsaE and TsaB. TsaD likely plays a direct catalytic role in this reaction. This Riemerella anatipestifer (Moraxella anatipestifer) protein is tRNA N6-adenosine threonylcarbamoyltransferase.